The chain runs to 292 residues: Syntaxin-19 (292 aa).

The span at 1–24 shows a compositional bias: basic and acidic residues; it reads MKDRLPELKQRTKETELSKDKDVP. Positions 1–28 are disordered; it reads MKDRLPELKQRTKETELSKDKDVPTTEA. A coiled-coil region spans residues 46–122; sequence VAERHLHEIQ…VKEVKKSEDE (77 aa). Residues 209–271 enclose the t-SNARE coiled-coil homology domain; the sequence is LSEIEQRHKE…NTTKEKFGLA (63 aa).

The protein belongs to the syntaxin family. As to quaternary structure, interacts with EGFR.

The protein resides in the cell membrane. It localises to the cytoplasm. Its function is as follows. Plays a role in endosomal trafficking of the epidermal growth factor receptor (EGFR). In Bos taurus (Bovine), this protein is Syntaxin-19 (STX19).